Reading from the N-terminus, the 858-residue chain is Bifunctional uridylyltransferase/uridylyl-removing enzyme (858 aa).

The tract at residues 1–324 (MSASVAAPPP…PATSGVTRVL (324 aa)) is uridylyltransferase. The interval 325-681 (SPGRFVEKQG…ARPSPVGDAL (357 aa)) is uridylyl-removing. The HD domain occupies 443–565 (VDQHILMVLR…VGNERRLTAL (123 aa)). 2 ACT domains span residues 682 to 761 (QVLV…PEPS) and 790 to 858 (ILSV…AIAV).

The protein belongs to the GlnD family. Requires Mg(2+) as cofactor.

It carries out the reaction [protein-PII]-L-tyrosine + UTP = [protein-PII]-uridylyl-L-tyrosine + diphosphate. The catalysed reaction is [protein-PII]-uridylyl-L-tyrosine + H2O = [protein-PII]-L-tyrosine + UMP + H(+). Its activity is regulated as follows. Uridylyltransferase (UTase) activity is inhibited by glutamine, while glutamine activates uridylyl-removing (UR) activity. In terms of biological role, modifies, by uridylylation and deuridylylation, the PII regulatory proteins (GlnB and homologs), in response to the nitrogen status of the cell that GlnD senses through the glutamine level. Under low glutamine levels, catalyzes the conversion of the PII proteins and UTP to PII-UMP and PPi, while under higher glutamine levels, GlnD hydrolyzes PII-UMP to PII and UMP (deuridylylation). Thus, controls uridylylation state and activity of the PII proteins, and plays an important role in the regulation of nitrogen assimilation and metabolism. This chain is Bifunctional uridylyltransferase/uridylyl-removing enzyme, found in Burkholderia thailandensis (strain ATCC 700388 / DSM 13276 / CCUG 48851 / CIP 106301 / E264).